A 292-amino-acid polypeptide reads, in one-letter code: Elongation factor Ts (292 aa).

Residues 79–82 are involved in Mg(2+) ion dislocation from EF-Tu; that stretch reads TDFV.

It belongs to the EF-Ts family.

The protein localises to the cytoplasm. Functionally, associates with the EF-Tu.GDP complex and induces the exchange of GDP to GTP. It remains bound to the aminoacyl-tRNA.EF-Tu.GTP complex up to the GTP hydrolysis stage on the ribosome. In Xylella fastidiosa (strain 9a5c), this protein is Elongation factor Ts.